Here is a 602-residue protein sequence, read N- to C-terminus: MEDLEEGTGEGCSGWFDREAICSDGSSDEEPNESFESIADMFDDGTQTQGNSLELFHTQEKEETRTQIQALKRKYIPSPEAGGDLSPRLRAISITPKKKKPSRRLFETPEDSGNGSLGNETTDTSSGFQVVGDSAVDVCDAGRLLNLNLLQSHNRVARLLAVFKEAYGVSYKELTREYKSDKTCNPDWVIALYSLSEPILNAARTTLQGICEYVFMQSRPTAAATVALLTVRFKCSKSRETVRKQMCGMFHSDPLLCLCDPPKVQSVPAALYWYKSSMYSGTFTHGEAPEWIKRQTMITCAMEETKFDLSEMVQWAYDNNYEDESQIAFEYARTATESPNANAWLASNAQAKHVRDCATMVRHYKRAEMKAMSMSQWVWKCCREEPEEGTWTPISLYLASEGVEVIRFLSAMKSWLRGIPKKNCLVFYGPPNTGKSLFTMSLIKFLRGRVISFANSKSHFWMQPLAEAKVVLLDDATRATWDYVDTYMRNAMDGNPLSIDCKYRTPVQVKCPPMLVTTNEDVHLNDRWRYLHSRIQVFHLKEPMPIDTAGNPEYSFSNRHWKAFFEKLQKPLDLSEDEGDPKDNGEHTQPFSCCARGTDVHV.

The interval 1-66 is disordered; sequence MEDLEEGTGE…HTQEKEETRT (66 aa). The Nuclear localization signal signature appears at 72–74; the sequence is KRK. Residues serine 78 and serine 86 each carry the phosphoserine; by host modification. The segment at 78-126 is disordered; the sequence is SPEAGGDLSPRLRAISITPKKKKPSRRLFETPEDSGNGSLGNETTDTSS. The Nuclear export signal motif lies at 85-94; the sequence is LSPRLRAISI. The span at 111 to 126 shows a compositional bias: polar residues; that stretch reads DSGNGSLGNETTDTSS. The segment at 138–304 is DNA-binding region; it reads VCDAGRLLNL…QTMITCAMEE (167 aa). Residues 403 to 553 form the SF3 helicase domain; the sequence is VEVIRFLSAM…MPIDTAGNPE (151 aa). 429 to 436 provides a ligand contact to ATP; sequence GPPNTGKS. Lysine 510 participates in a covalent cross-link: Glycyl lysine isopeptide (Lys-Gly) (interchain with G-Cter in SUMO). Residues 573–602 are disordered; that stretch reads DLSEDEGDPKDNGEHTQPFSCCARGTDVHV.

It belongs to the papillomaviridae E1 protein family. As to quaternary structure, can form hexamers. Interacts with E2 protein; this interaction increases E1 DNA binding specificity. Interacts with host DNA polymerase subunit POLA2. Interacts with host single stranded DNA-binding protein RPA1. Interacts with host TOP1; this interaction stimulates the enzymatic activity of TOP1. Post-translationally, phosphorylated. Sumoylated.

The protein resides in the host nucleus. The enzyme catalyses Couples ATP hydrolysis with the unwinding of duplex DNA by translocating in the 3'-5' direction.. The catalysed reaction is ATP + H2O = ADP + phosphate + H(+). In terms of biological role, ATP-dependent DNA 3'-5' helicase required for initiation of viral DNA replication. It forms a complex with the viral E2 protein. The E1-E2 complex binds to the replication origin which contains binding sites for both proteins. During the initial step, a dimer of E1 interacts with a dimer of protein E2 leading to a complex that binds the viral origin of replication with high specificity. Then, a second dimer of E1 displaces the E2 dimer in an ATP-dependent manner to form the E1 tetramer. Following this, two E1 monomers are added to each half of the site, which results in the formation of two E1 trimers on the viral ori. Subsequently, two hexamers will be created. The double hexamer acts as a bi-directional helicase machinery and unwinds the viral DNA and then recruits the host DNA polymerase to start replication. This chain is Replication protein E1, found in Mastomys natalensis papillomavirus (isolate African multimammate rat) (MnPV).